Consider the following 735-residue polypeptide: Transcription factor sphG (735 aa).

A DNA-binding region (zn(2)-C6 fungal-type) is located at residues 13–40 (CDQCRARKIRCSREKPSCRNCGRLGLQC). The interval 89–110 (TISPSARCPASPASPSPRLSDK) is disordered. The span at 91-106 (SPSARCPASPASPSPR) shows a compositional bias: low complexity.

It localises to the nucleus. Transcription factor that regulates the expression of the gene cluster that mediates the biosynthesis of sphingofungins, bioactive molecules acting as sphingolipid inhibitors via inhibiting serine palmitoyl transferase (SPT). The polypeptide is Transcription factor sphG (Aspergillus fumigatus (strain CBS 144.89 / FGSC A1163 / CEA10) (Neosartorya fumigata)).